The chain runs to 231 residues: Small ribosomal subunit protein uS3 (231 aa).

A KH type-2 domain is found at Val17 to Gln86.

Belongs to the universal ribosomal protein uS3 family. As to quaternary structure, part of the 30S ribosomal subunit.

Functionally, binds the lower part of the 30S subunit head. In Methanoregula boonei (strain DSM 21154 / JCM 14090 / 6A8), this protein is Small ribosomal subunit protein uS3.